A 242-amino-acid polypeptide reads, in one-letter code: UPF0073 membrane protein Rv1085c (242 aa).

7 consecutive transmembrane segments (helical) span residues 42–62, 67–87, 108–128, 133–153, 159–179, 186–206, and 222–242; these read VYSA…SWAV, AGLT…VSAT, SMIF…ALPA, VVLS…MCWP, VGVP…ATIL, ALVL…LYAV, and FHAC…FVVF.

It belongs to the UPF0073 (Hly-III) family.

It localises to the cell membrane. In Mycobacterium tuberculosis (strain ATCC 25618 / H37Rv), this protein is UPF0073 membrane protein Rv1085c.